Here is a 127-residue protein sequence, read N- to C-terminus: Small ribosomal subunit protein uS11 (127 aa).

This sequence belongs to the universal ribosomal protein uS11 family. As to quaternary structure, part of the 30S ribosomal subunit. Interacts with proteins S7 and S18. Binds to IF-3.

Located on the platform of the 30S subunit, it bridges several disparate RNA helices of the 16S rRNA. Forms part of the Shine-Dalgarno cleft in the 70S ribosome. The polypeptide is Small ribosomal subunit protein uS11 (Rhodopirellula baltica (strain DSM 10527 / NCIMB 13988 / SH1)).